The primary structure comprises 356 residues: L-lactate dehydrogenase A (356 aa).

NAD(+) contacts are provided by residues 75 to 80 (DALPDK) and arginine 121. Substrate contacts are provided by arginine 128, asparagine 160, and arginine 191. Asparagine 160 contributes to the NAD(+) binding site. Histidine 215 acts as the Proton acceptor in catalysis. Threonine 270 contributes to the substrate binding site.

Belongs to the LDH/MDH superfamily. LDH family. As to quaternary structure, tetramer that arise from random association of LDH-A and LDH-B.

It catalyses the reaction (S)-lactate + NAD(+) = pyruvate + NADH + H(+). It functions in the pathway fermentation; pyruvate fermentation to lactate; (S)-lactate from pyruvate: step 1/1. The protein is L-lactate dehydrogenase A of Hordeum vulgare (Barley).